The primary structure comprises 85 residues: Toxin BmKaTx10 (85 aa).

An N-terminal signal peptide occupies residues 1–19 (MNYLVMVSFALLLMTGVES). One can recognise an LCN-type CS-alpha/beta domain in the interval 21–83 (RDGYIALPHN…VPIRVPGRCH (63 aa)). Intrachain disulfides connect cysteine 31-cysteine 82, cysteine 35-cysteine 55, cysteine 41-cysteine 65, and cysteine 45-cysteine 67.

It belongs to the long (4 C-C) scorpion toxin superfamily. Sodium channel inhibitor family. Alpha subfamily. In terms of tissue distribution, expressed by the venom gland.

It is found in the secreted. Its function is as follows. Alpha toxins bind voltage-independently at site-3 of sodium channels (Nav) and inhibit the inactivation of the activated channels, thereby blocking neuronal transmission. The sequence is that of Toxin BmKaTx10 from Olivierus martensii (Manchurian scorpion).